The primary structure comprises 138 residues: Small ribosomal subunit protein bS18m (138 aa).

Belongs to the bacterial ribosomal protein bS18 family. In terms of assembly, component of the mitochondrial small ribosomal subunit. Mature mitochondrial ribosomes consist of a small (37S) and a large (54S) subunit. The 37S subunit contains at least 33 different proteins and 1 molecule of RNA (15S). The 54S subunit contains at least 45 different proteins and 1 molecule of RNA (21S).

Its subcellular location is the mitochondrion. In Saccharomyces cerevisiae (strain RM11-1a) (Baker's yeast), this protein is Small ribosomal subunit protein bS18m (RSM18).